The following is a 143-amino-acid chain: Peptidyl-prolyl cis-trans isomerase B (143 aa).

Residues M1 to G143 form the PPIase cyclophilin-type domain.

The protein belongs to the cyclophilin-type PPIase family.

It is found in the cytoplasm. The enzyme catalyses [protein]-peptidylproline (omega=180) = [protein]-peptidylproline (omega=0). Inhibited by cyclosporin A (CsA). Its function is as follows. PPIases accelerate the folding of proteins. It catalyzes the cis-trans isomerization of proline imidic peptide bonds in oligopeptides. The chain is Peptidyl-prolyl cis-trans isomerase B (ppiB) from Bacillus subtilis (strain 168).